A 346-amino-acid polypeptide reads, in one-letter code: tRNA N6-adenosine threonylcarbamoyltransferase (346 aa).

The Fe cation site is built by H111 and H115. Substrate contacts are provided by residues 134–138 (LVSGG), D167, G180, and N277. A Fe cation-binding site is contributed by D305.

This sequence belongs to the KAE1 / TsaD family. Fe(2+) is required as a cofactor.

It localises to the cytoplasm. The enzyme catalyses L-threonylcarbamoyladenylate + adenosine(37) in tRNA = N(6)-L-threonylcarbamoyladenosine(37) in tRNA + AMP + H(+). In terms of biological role, required for the formation of a threonylcarbamoyl group on adenosine at position 37 (t(6)A37) in tRNAs that read codons beginning with adenine. Is involved in the transfer of the threonylcarbamoyl moiety of threonylcarbamoyl-AMP (TC-AMP) to the N6 group of A37, together with TsaE and TsaB. TsaD likely plays a direct catalytic role in this reaction. The protein is tRNA N6-adenosine threonylcarbamoyltransferase of Bordetella parapertussis (strain 12822 / ATCC BAA-587 / NCTC 13253).